The sequence spans 272 residues: Shikimate dehydrogenase (NADP(+)) (272 aa).

Residues 14–16 and T61 contribute to the shikimate site; that span reads SKS. The active-site Proton acceptor is K65. E77 serves as a coordination point for NADP(+). Shikimate-binding residues include N86 and D102. NADP(+)-binding positions include 126–130, 149–154, and M213; these read GAGGA and NRTVSR. Y215 contributes to the shikimate binding site. G237 serves as a coordination point for NADP(+).

It belongs to the shikimate dehydrogenase family. As to quaternary structure, homodimer.

It catalyses the reaction shikimate + NADP(+) = 3-dehydroshikimate + NADPH + H(+). It participates in metabolic intermediate biosynthesis; chorismate biosynthesis; chorismate from D-erythrose 4-phosphate and phosphoenolpyruvate: step 4/7. In terms of biological role, involved in the biosynthesis of the chorismate, which leads to the biosynthesis of aromatic amino acids. Catalyzes the reversible NADPH linked reduction of 3-dehydroshikimate (DHSA) to yield shikimate (SA). This Escherichia coli O7:K1 (strain IAI39 / ExPEC) protein is Shikimate dehydrogenase (NADP(+)).